Consider the following 233-residue polypeptide: Peptidyl-tRNA hydrolase (233 aa).

Tyr14 is a binding site for tRNA. Residue His19 is the Proton acceptor of the active site. 3 residues coordinate tRNA: Phe64, Asn66, and Asn112. Residues Val187–Lys233 form a disordered region.

Belongs to the PTH family. Monomer.

The protein localises to the cytoplasm. The catalysed reaction is an N-acyl-L-alpha-aminoacyl-tRNA + H2O = an N-acyl-L-amino acid + a tRNA + H(+). Its function is as follows. Hydrolyzes ribosome-free peptidyl-tRNAs (with 1 or more amino acids incorporated), which drop off the ribosome during protein synthesis, or as a result of ribosome stalling. Functionally, catalyzes the release of premature peptidyl moieties from peptidyl-tRNA molecules trapped in stalled 50S ribosomal subunits, and thus maintains levels of free tRNAs and 50S ribosomes. This Roseobacter denitrificans (strain ATCC 33942 / OCh 114) (Erythrobacter sp. (strain OCh 114)) protein is Peptidyl-tRNA hydrolase.